The following is a 360-amino-acid chain: Phospho-N-acetylmuramoyl-pentapeptide-transferase (360 aa).

Helical transmembrane passes span 21-41 (YITFRAIMALLTAMGIGLWIG), 73-93 (TMGGIMILIAIGVSTLLWADL), 98-118 (VWFVLFVLFGYGAVGFVDDYW), 132-152 (WKYFWLSVIALIAVFGIYAVG), 168-188 (FMPQLGIFFIILSYFVIVGTS), 199-219 (GLAIVPTIMVASAFALIAWAT), 236-256 (AGELVILCTAIVGAGLGFLWY), 263-283 (VFMGDVGSLSLGGALGTIAVL), 288-308 (LLLVIMGGVFVVEALSVILQV), and 338-358 (VIVCFWIITLMLVLIGLVTLK).

Belongs to the glycosyltransferase 4 family. MraY subfamily. Mg(2+) is required as a cofactor.

Its subcellular location is the cell inner membrane. It carries out the reaction UDP-N-acetyl-alpha-D-muramoyl-L-alanyl-gamma-D-glutamyl-meso-2,6-diaminopimeloyl-D-alanyl-D-alanine + di-trans,octa-cis-undecaprenyl phosphate = di-trans,octa-cis-undecaprenyl diphospho-N-acetyl-alpha-D-muramoyl-L-alanyl-D-glutamyl-meso-2,6-diaminopimeloyl-D-alanyl-D-alanine + UMP. It participates in cell wall biogenesis; peptidoglycan biosynthesis. In terms of biological role, catalyzes the initial step of the lipid cycle reactions in the biosynthesis of the cell wall peptidoglycan: transfers peptidoglycan precursor phospho-MurNAc-pentapeptide from UDP-MurNAc-pentapeptide onto the lipid carrier undecaprenyl phosphate, yielding undecaprenyl-pyrophosphoryl-MurNAc-pentapeptide, known as lipid I. This is Phospho-N-acetylmuramoyl-pentapeptide-transferase from Actinobacillus pleuropneumoniae serotype 7 (strain AP76).